Here is a 318-residue protein sequence, read N- to C-terminus: Glutathione synthetase (318 aa).

One can recognise an ATP-grasp domain in the interval 124 to 310 (EKLFTAWFPE…ITGKLMDAIE (187 aa)). 150–207 (FREQHGDVILKPLDGMGGASIFRVKEGDPNLSVIIETLTNHGQNYCMAQTFVPDISNG) is a binding site for ATP. Mg(2+) contacts are provided by glutamate 281 and asparagine 283.

The protein belongs to the prokaryotic GSH synthase family. The cofactor is Mg(2+). Requires Mn(2+) as cofactor.

The catalysed reaction is gamma-L-glutamyl-L-cysteine + glycine + ATP = glutathione + ADP + phosphate + H(+). Its pathway is sulfur metabolism; glutathione biosynthesis; glutathione from L-cysteine and L-glutamate: step 2/2. This chain is Glutathione synthetase, found in Vibrio cholerae serotype O1 (strain ATCC 39315 / El Tor Inaba N16961).